Consider the following 94-residue polypeptide: Putative septation protein SpoVG (94 aa).

It belongs to the SpoVG family.

Could be involved in septation. The sequence is that of Putative septation protein SpoVG from Acholeplasma laidlawii (strain PG-8A).